Here is a 573-residue protein sequence, read N- to C-terminus: Lauric acid 10-hydroxylase (573 aa).

2 consecutive transmembrane segments (helical) span residues 3 to 23 (YVNI…LMSL) and 298 to 318 (LFPT…LLIF). Cys-516 is a heme binding site.

The protein belongs to the cytochrome P450 family. Heme is required as a cofactor. In terms of tissue distribution, mostly expressed in flowers and leaves and, at low levels, in roots and stems.

It localises to the endoplasmic reticulum membrane. The enzyme catalyses an omega-methyl-medium-chain fatty acid + reduced [NADPH--hemoprotein reductase] + O2 = an omega-hydroxy-medium-chain fatty acid + oxidized [NADPH--hemoprotein reductase] + H2O + H(+). The catalysed reaction is decanoate + reduced [NADPH--hemoprotein reductase] + O2 = 10-hydroxydecanoate + oxidized [NADPH--hemoprotein reductase] + H2O + H(+). It catalyses the reaction dodecanoate + reduced [NADPH--hemoprotein reductase] + O2 = 12-hydroxydodecanoate + oxidized [NADPH--hemoprotein reductase] + H2O + H(+). The protein operates within lipid metabolism; fatty acid metabolism. Cytochrome P450 hydroxylase catalyzing the conversion of decanoate (capric acid) and dodecanoate (lauric acid) to their corresponding omega-hydroxy metabolites, 10-hydroxydecanoate and 12-hydroxydodecanoate, respectively; these hydroxylated components affect plant growth, including reducing root elongation. This Petunia hybrida (Petunia) protein is Lauric acid 10-hydroxylase.